Consider the following 119-residue polypeptide: Large ribosomal subunit protein uL22c (119 aa).

Belongs to the universal ribosomal protein uL22 family. Part of the 50S ribosomal subunit.

It localises to the plastid. It is found in the chloroplast. Functionally, this protein binds specifically to 23S rRNA. The globular domain of the protein is located near the polypeptide exit tunnel on the outside of the subunit, while an extended beta-hairpin is found that lines the wall of the exit tunnel in the center of the 70S ribosome. This Chaetosphaeridium globosum (Charophycean green alga) protein is Large ribosomal subunit protein uL22c (rpl22).